Here is a 557-residue protein sequence, read N- to C-terminus: Multidrug transporter FLR1 (557 aa).

Asn33, Asn48, and Asn106 each carry an N-linked (GlcNAc...) asparagine glycan. Residues 44 to 57 show a composition bias toward low complexity; it reads SESSNMSFNSGSEE. The tract at residues 44 to 67 is disordered; it reads SESSNMSFNSGSEENSQEKSVEDL. 8 helical membrane passes run 113–133, 149–169, 181–201, 204–224, 238–258, 271–291, 355–375, and 387–407; these read ALII…SSIY, VVGT…PIVF, LPVY…CALA, FAGL…ALST, LALV…LAPL, WIFW…TFFF, LYIA…PIVF, and GLAY…LLVF. Residue Asn418 is glycosylated (N-linked (GlcNAc...) asparagine). The next 4 membrane-spanning stretches (helical) occupy residues 426–446, 450–470, 484–506, and 521–541; these read TLIL…MFGW, VHWI…FNIF, YVAS…FPLF, and VAWG…IPFV.

Belongs to the major facilitator superfamily.

The protein localises to the cell membrane. In terms of biological role, multidrug transporter that confers resistance to 5-flucytosine (5-FC) and clotrimazole. Also confers resistance to benomyl, but not 4-nitroquinoline-N-oxide, cycloheximide, or fluconazole. Plays direct roles in extrusion of 5-flucytosine and clotrimazole. This is Multidrug transporter FLR1 from Candida glabrata (strain ATCC 2001 / BCRC 20586 / JCM 3761 / NBRC 0622 / NRRL Y-65 / CBS 138) (Yeast).